The sequence spans 156 residues: Small ribosomal subunit protein uS7 (156 aa).

This sequence belongs to the universal ribosomal protein uS7 family. As to quaternary structure, part of the 30S ribosomal subunit. Contacts proteins S9 and S11.

In terms of biological role, one of the primary rRNA binding proteins, it binds directly to 16S rRNA where it nucleates assembly of the head domain of the 30S subunit. Is located at the subunit interface close to the decoding center, probably blocks exit of the E-site tRNA. The protein is Small ribosomal subunit protein uS7 of Shewanella baltica (strain OS223).